Here is a 372-residue protein sequence, read N- to C-terminus: Cyclin-dependent kinase 9 (372 aa).

Residues 19-315 (YEKLAKIGQG…SDDALNHDFF (297 aa)) form the Protein kinase domain. 25–33 (IGQGTFGEV) is a binding site for ATP. K44 bears the N6-acetyllysine; by EP300/CBP, PCAF/KAT2B and GCN5/KAT2A mark. ATP is bound by residues K48 and 104–106 (DFC). At K48 the chain carries N6-acetyllysine; by PCAF/KAT2B and GCN5/KAT2A. Catalysis depends on D149, which acts as the Proton acceptor. Residues 166-191 (ADFGLARAFSLAKNSQPNRYTNRVVT) are T-loop. Residue D167 participates in ATP binding. At S175 the chain carries Phosphoserine. T186 bears the Phosphothreonine; by CaMK1D mark. The interval 343–372 (RRKGSQITQQSTNQSRNPATTNQTEFERVF) is disordered. Residue S347 is modified to Phosphoserine; by CDK9 and PKA. A compositionally biased stretch (polar residues) spans 347–366 (SQITQQSTNQSRNPATTNQT). A Phosphothreonine; by CDK9 modification is found at T350. S353 is modified (phosphoserine; by CDK9). T354 carries the phosphothreonine; by CDK9 modification. Phosphoserine; by CDK9 is present on S357. A phosphothreonine; by CDK9 mark is found at T362 and T363.

Belongs to the protein kinase superfamily. CMGC Ser/Thr protein kinase family. CDC2/CDKX subfamily. As to quaternary structure, component of the super elongation complex (SEC), at least composed of EAF1, EAF2, CDK9, MLLT3/AF9, AFF (AFF1 or AFF4), the P-TEFb complex and ELL (ELL, ELL2 or ELL3). Associates with CCNT1/cyclin-T1, CCNT2/cyclin-T2 (isoform A and isoform B) or CCNK/cyclin-K to form active P-TEFb. P-TEFb forms a complex with AFF4/AF5Q31 and is part of the super elongation complex (SEC). Component of a complex which is composed of at least 5 members: HTATSF1/Tat-SF1, P-TEFb complex, RNA pol II, SUPT5H, and NCL/nucleolin. Associates with UBR5 and forms a transcription regulatory complex composed of CDK9, RNAP II, UBR5 and TFIIS/TCEA1 that can stimulate target gene transcription (e.g. gamma fibrinogen/FGG) by recruiting their promoters. Component of the 7SK snRNP inactive complex which is composed of at least 8 members: P-TEFb (composed of CDK9 and CCNT1/cyclin-T1), HEXIM1, HEXIM2, LARP7, BCDIN3, SART3 proteins and 7SK and U6 snRNAs. This inactive 7SK snRNP complex can also interact with NCOR1 and HDAC3, probably to regulate CDK9 acetylation. Release of P-TEFb from P-TEFb/7SK snRNP complex requires both PP2B to transduce calcium Ca(2+) signaling in response to stimuli (e.g. UV or hexamethylene bisacetamide (HMBA)), and PPP1CA to dephosphorylate Thr-186. This released P-TEFb remains inactive in the pre-initiation complex with BRD4 until new Thr-186 phosphorylation occurs after the synthesis of a short RNA. Interacts with BRD4; to target chromatin binding. Interacts with JMJD6. Interacts with activated nuclear STAT3 and RELA/p65. Binds to AR and MYOD1. Forms a complex composed of CDK9, CCNT1/cyclin-T1, EP300 and GATA4 that stimulates hypertrophy in cardiomyocytes. The large PER complex involved in the repression of transcriptional termination is composed of at least PER2, CDK9, DDX5, DHX9, NCBP1 and POLR2A (active). Interacts with HSF1. Interacts with TBX21. Interacts with WDR43. Interacts with ZMYND8; the association appears to occur between homodimeric ZMYND8 and the activated form of the P-TEFb complex. In terms of processing, autophosphorylation at Thr-186, Ser-347, Thr-350, Ser-353, Thr-354 and Ser-357 triggers kinase activity by promoting cyclin and substrate binding upon conformational changes. Thr-186 phosphorylation requires the calcium Ca(2+) signaling pathway, including CaMK1D and calmodulin. This inhibition is relieved by Thr-29 dephosphorylation. Phosphorylation at Ser-175 inhibits kinase activity. Can be phosphorylated on either Thr-362 or Thr-363 but not on both simultaneously. Post-translationally, dephosphorylation of Thr-186 by PPM1A and PPM1B blocks CDK9 activity and may lead to CDK9 proteasomal degradation. However, PPP1CA-mediated Thr-186 dephosphorylation is required to release P-TEFb from its inactive P-TEFb/7SK snRNP complex. Dephosphorylated at Ser-347 by the PNUTS-PP1 complex during RNA polymerase II transcription pause-release. Dephosphorylation of C-terminus Thr and Ser residues by protein phosphatase-1 (PP1) triggers CDK9 activity. N6-acetylation of Lys-44 promotes kinase activity, whereas acetylation of both Lys-44 and Lys-48 mediated by PCAF/KAT2B and GCN5/KAT2A reduces kinase activity. The acetylated form associates with PML bodies in the nuclear matrix and with the transcriptionally silent HIV-1 genome; deacetylated upon transcription stimulation. Deacetylated by SIRT7, promoting the kinase activity and subsequent 'Ser-2' phosphorylation of the C-terminal domain (CTD) of RNA polymerase II. In terms of processing, polyubiquitinated and thus activated by UBR5. This ubiquitination is promoted by TFIIS/TCEA1 and favors 'Ser-2' phosphorylation of RPB1/POLR2A CTD. Expressed at high levels in brain and kidney.

It is found in the nucleus. The protein resides in the cytoplasm. Its subcellular location is the PML body. The catalysed reaction is L-seryl-[protein] + ATP = O-phospho-L-seryl-[protein] + ADP + H(+). The enzyme catalyses L-threonyl-[protein] + ATP = O-phospho-L-threonyl-[protein] + ADP + H(+). It carries out the reaction [DNA-directed RNA polymerase] + ATP = phospho-[DNA-directed RNA polymerase] + ADP + H(+). With respect to regulation, activation by Thr-186 phosphorylation is calcium Ca(2+) signaling pathway-dependent; actively inactivated by dephosphorylation mediated by PPP1CA, PPM1A and PPM1B. Reversibly repressed by acetylation at Lys-44 and Lys-48. Its function is as follows. Protein kinase involved in the regulation of transcription. Member of the cyclin-dependent kinase pair (CDK9/cyclin-T) complex, also called positive transcription elongation factor b (P-TEFb), which facilitates the transition from abortive to productive elongation by phosphorylating the CTD (C-terminal domain) of the large subunit of RNA polymerase II (RNAP II) POLR2A, SUPT5H and RDBP. This complex is inactive when in the 7SK snRNP complex form. Phosphorylates EP300, MYOD1, RPB1/POLR2A and AR and the negative elongation factors DSIF and NELFE. Regulates cytokine inducible transcription networks by facilitating promoter recognition of target transcription factors (e.g. TNF-inducible RELA/p65 activation and IL-6-inducible STAT3 signaling). Promotes RNA synthesis in genetic programs for cell growth, differentiation and viral pathogenesis. P-TEFb is also involved in cotranscriptional histone modification, mRNA processing and mRNA export. Modulates a complex network of chromatin modifications including histone H2B monoubiquitination (H2Bub1), H3 lysine 4 trimethylation (H3K4me3) and H3K36me3; integrates phosphorylation during transcription with chromatin modifications to control co-transcriptional histone mRNA processing. The CDK9/cyclin-K complex has also a kinase activity towards CTD of RNAP II and can substitute for CDK9/cyclin-T P-TEFb in vitro. Replication stress response protein; the CDK9/cyclin-K complex is required for genome integrity maintenance, by promoting cell cycle recovery from replication arrest and limiting single-stranded DNA amount in response to replication stress, thus reducing the breakdown of stalled replication forks and avoiding DNA damage. In addition, probable function in DNA repair of isoform 2 via interaction with KU70/XRCC6. Promotes cardiac myocyte enlargement. RPB1/POLR2A phosphorylation on 'Ser-2' in CTD activates transcription. AR phosphorylation modulates AR transcription factor promoter selectivity and cell growth. DSIF and NELF phosphorylation promotes transcription by inhibiting their negative effect. The phosphorylation of MYOD1 enhances its transcriptional activity and thus promotes muscle differentiation. Catalyzes phosphorylation of KAT5, promoting KAT5 recruitment to chromatin and histone acetyltransferase activity. In Mus musculus (Mouse), this protein is Cyclin-dependent kinase 9 (Cdk9).